We begin with the raw amino-acid sequence, 303 residues long: Ornithine carbamoyltransferase (303 aa).

Carbamoyl phosphate contacts are provided by residues 52-55, Gln79, Arg103, and 130-133; these read STRT and HPCQ. L-ornithine is bound by residues Asn161, Asp221, and 225-226; that span reads SM. Residues 260 to 261 and Arg288 contribute to the carbamoyl phosphate site; that span reads CL.

The protein belongs to the aspartate/ornithine carbamoyltransferase superfamily. OTCase family.

It is found in the cytoplasm. It catalyses the reaction carbamoyl phosphate + L-ornithine = L-citrulline + phosphate + H(+). The protein operates within amino-acid biosynthesis; L-arginine biosynthesis; L-arginine from L-ornithine and carbamoyl phosphate: step 1/3. Its function is as follows. Reversibly catalyzes the transfer of the carbamoyl group from carbamoyl phosphate (CP) to the N(epsilon) atom of ornithine (ORN) to produce L-citrulline. In Rhizobium meliloti (strain 1021) (Ensifer meliloti), this protein is Ornithine carbamoyltransferase (argF).